A 1249-amino-acid chain; its full sequence is Fanconi anemia group J protein (1249 aa).

Residues Gly-11–Cys-442 enclose the Helicase ATP-binding domain. The span at Gln-102 to Asp-127 shows a compositional bias: polar residues. A disordered region spans residues Gln-102–Lys-131. The Nuclear localization signal motif lies at Lys-158–Cys-175. Ala-185–Thr-192 provides a ligand contact to ATP. Residues Cys-283, Cys-298, Cys-310, and Cys-350 each contribute to the [4Fe-4S] cluster site. The DEAH box signature appears at Asp-393–His-396. A phosphoserine mark is found at Ser-505, Ser-927, Ser-930, Ser-956, Ser-990, Ser-1004, and Ser-1032. The segment at His-888–Ser-1063 is interaction with BRCA1. Disordered regions lie at residues Lys-1018–Glu-1042 and Val-1108–Asp-1127. Polar residues predominate over residues Leu-1023–Ser-1032. Residues Glu-1110–Glu-1122 show a composition bias toward basic and acidic residues. Ser-1237 bears the Phosphoserine mark. At Lys-1249 the chain carries N6-acetyllysine.

It belongs to the DEAD box helicase family. DEAH subfamily. As to quaternary structure, interacts with the replication protein A complex (RPA) via the RPA1 subunit; following DNA damage they colocalize in foci in the nucleus. Binds directly to the BRCT domains of BRCA1. Interacts with the CIA complex components CIAO1, CIAO2B and MMS19. It depends on [4Fe-4S] cluster as a cofactor. In terms of processing, phosphorylated. Phosphorylation is necessary for interaction with BRCA1, and is cell-cycle regulated. Post-translationally, acetylation at Lys-1249 facilitates DNA end processing required for repair and checkpoint signaling. In terms of tissue distribution, ubiquitously expressed, with highest levels in testis.

It is found in the nucleus. Its subcellular location is the cytoplasm. It catalyses the reaction Couples ATP hydrolysis with the unwinding of duplex DNA at the replication fork by translocating in the 5'-3' direction. This creates two antiparallel DNA single strands (ssDNA). The leading ssDNA polymer is the template for DNA polymerase III holoenzyme which synthesizes a continuous strand.. The catalysed reaction is ATP + H2O = ADP + phosphate + H(+). With respect to regulation, helicase activity on forked substrates is stimulated by replication protein A complex heterotrimer (RPA1, RPA2, RPA3). Helicase activity on G-quadruplex DNA is stimulated 3-fold by RPA, and inhibited by MSH2/MSH6. Unwinding of G-quadruplex DNA is inhibited by ATP-gamma-S and telomestatin (TMS); TMA does not inhibit unwinding of forked-duplex DNA. Helicase activity on dsDNA and G-quadruplex DNA is inhibited by porphyrin derivatives meso-tetra (N-methyl-4-pyridyl) porphine tetra tosylate (T4) and N-methyl mesoporphyrin IX (NMM). Functionally, DNA-dependent ATPase and 5'-3' DNA helicase required for the maintenance of chromosomal stability. Acts late in the Fanconi anemia pathway, after FANCD2 ubiquitination. Involved in the repair of DNA double-strand breaks by homologous recombination in a manner that depends on its association with BRCA1. Involved in the repair of abasic sites at replication forks by promoting the degradation of DNA-protein cross-links: acts by catalyzing unfolding of HMCES DNA-protein cross-link via its helicase activity, exposing the underlying DNA and enabling cleavage of the DNA-protein adduct by the SPRTN metalloprotease. Can unwind RNA:DNA substrates. Unwinds G-quadruplex DNA; unwinding requires a 5'-single stranded tail. The protein is Fanconi anemia group J protein of Homo sapiens (Human).